A 428-amino-acid chain; its full sequence is 3-phosphoshikimate 1-carboxyvinyltransferase (428 aa).

The 3-phosphoshikimate site is built by K22, S23, and R27. K22 lines the phosphoenolpyruvate pocket. G96 and R124 together coordinate phosphoenolpyruvate. 7 residues coordinate 3-phosphoshikimate: S170, S171, Q172, S198, D314, N337, and K341. Q172 is a phosphoenolpyruvate binding site. D314 functions as the Proton acceptor in the catalytic mechanism. Positions 345, 387, and 412 each coordinate phosphoenolpyruvate.

This sequence belongs to the EPSP synthase family. As to quaternary structure, monomer.

Its subcellular location is the cytoplasm. The catalysed reaction is 3-phosphoshikimate + phosphoenolpyruvate = 5-O-(1-carboxyvinyl)-3-phosphoshikimate + phosphate. The protein operates within metabolic intermediate biosynthesis; chorismate biosynthesis; chorismate from D-erythrose 4-phosphate and phosphoenolpyruvate: step 6/7. Functionally, catalyzes the transfer of the enolpyruvyl moiety of phosphoenolpyruvate (PEP) to the 5-hydroxyl of shikimate-3-phosphate (S3P) to produce enolpyruvyl shikimate-3-phosphate and inorganic phosphate. This Vibrio vulnificus (strain YJ016) protein is 3-phosphoshikimate 1-carboxyvinyltransferase.